A 214-amino-acid polypeptide reads, in one-letter code: Ribosomal RNA large subunit methyltransferase E (214 aa).

5 residues coordinate S-adenosyl-L-methionine: Gly-60, Trp-62, Asp-86, Asp-102, and Asp-127. The active-site Proton acceptor is the Lys-167.

Belongs to the class I-like SAM-binding methyltransferase superfamily. RNA methyltransferase RlmE family.

The protein localises to the cytoplasm. It catalyses the reaction uridine(2552) in 23S rRNA + S-adenosyl-L-methionine = 2'-O-methyluridine(2552) in 23S rRNA + S-adenosyl-L-homocysteine + H(+). Specifically methylates the uridine in position 2552 of 23S rRNA at the 2'-O position of the ribose in the fully assembled 50S ribosomal subunit. The protein is Ribosomal RNA large subunit methyltransferase E of Janthinobacterium sp. (strain Marseille) (Minibacterium massiliensis).